A 262-amino-acid chain; its full sequence is Small ribosomal subunit protein eS4 (262 aa).

An S4 RNA-binding domain is found at 42–105 (LPLIIMLRNR…GEFFRLLYDV (64 aa)).

It belongs to the eukaryotic ribosomal protein eS4 family.

This Ixodes scapularis (Black-legged tick) protein is Small ribosomal subunit protein eS4 (RpS4).